Here is a 772-residue protein sequence, read N- to C-terminus: Polyribonucleotide nucleotidyltransferase (772 aa).

The Mg(2+) site is built by aspartate 488 and aspartate 494. The KH domain maps to 555 to 614 (PRLTTLKINPEKIRDVIGKGGAVIRGLQEETGTTINIDEDGTITIASTDPEKAEFAKKRI). One can recognise an S1 motif domain in the interval 624 to 692 (GKVYEGPVTK…EKGRVKLSMK (69 aa)). The interval 690-772 (SMKALTERPA…QPYAPRDSQE (83 aa)) is disordered. Positions 703 to 740 (YSERPPREDRGDRGDRGGERRERSDRGDRGGDRGERAP) are enriched in basic and acidic residues. Residues 743–757 (NSEQQQQPRSNEQQP) are compositionally biased toward low complexity.

The protein belongs to the polyribonucleotide nucleotidyltransferase family. It depends on Mg(2+) as a cofactor.

The protein resides in the cytoplasm. The enzyme catalyses RNA(n+1) + phosphate = RNA(n) + a ribonucleoside 5'-diphosphate. Its function is as follows. Involved in mRNA degradation. Catalyzes the phosphorolysis of single-stranded polyribonucleotides processively in the 3'- to 5'-direction. The chain is Polyribonucleotide nucleotidyltransferase from Variovorax paradoxus (strain S110).